The chain runs to 746 residues: NAD(P)H-quinone oxidoreductase subunit 5, chloroplastic (746 aa).

The next 16 helical transmembrane spans lie at 9-29 (WIIPFIPLPVPILLGVGLLLF), 40-60 (WTFLSIFLLSIVMIFALYLSI), 89-109 (IDPLTSIMSILITTVGILVLI), 125-145 (FAYMGFFNTSMLGLVTSSNLI), 147-167 (VYFFWELVGMCSYLLIGFWFT), 185-205 (GDFGLLLGILGLYWITGSFEF), 221-241 (VNFLFLTLCAFLLFVGPIAKS), 258-278 (TPISALIHAATMVAAGIFLVA), 280-300 (LLPLFIVIPSIMYIISLIGII), 327-347 (LGYMMLALGMGSYRSALFHLI), 354-374 (ALLFLGSGSIIHSMEAIVGYS), 396-416 (TAFLVGTLSLCGIPPLACFWS), 425-445 (LLFSPIFAIIACSTAGLTAFY), 547-567 (ILFPMLVLLLFTLFIGAIGIP), 608-628 (FSVSIAFFGIFIAYCLYKPFY), and 723-743 (YLFLYLSYVLIFLTILFFFYF).

It belongs to the complex I subunit 5 family. In terms of assembly, NDH is composed of at least 16 different subunits, 5 of which are encoded in the nucleus.

The protein resides in the plastid. It is found in the chloroplast thylakoid membrane. It catalyses the reaction a plastoquinone + NADH + (n+1) H(+)(in) = a plastoquinol + NAD(+) + n H(+)(out). The catalysed reaction is a plastoquinone + NADPH + (n+1) H(+)(in) = a plastoquinol + NADP(+) + n H(+)(out). In terms of biological role, NDH shuttles electrons from NAD(P)H:plastoquinone, via FMN and iron-sulfur (Fe-S) centers, to quinones in the photosynthetic chain and possibly in a chloroplast respiratory chain. The immediate electron acceptor for the enzyme in this species is believed to be plastoquinone. Couples the redox reaction to proton translocation, and thus conserves the redox energy in a proton gradient. This is NAD(P)H-quinone oxidoreductase subunit 5, chloroplastic (ndhF) from Barbarea verna (Land cress).